The primary structure comprises 1608 residues: Hemolysin (1608 aa).

A signal peptide spans 1–30 (MKNNNFRLSAAGKLAAALAIILAASAGAYA). Disordered regions lie at residues 296–315 (SRVDDASSNKNGGDNYQNYR), 452–488 (KSSERGYQRNHTSSLRTGRWSNSDESESLKASELRSE), 716–737 (EHTRDSEKTTRTENSASSLSGG), 971–1030 (AVNL…SASQ), 1168–1199 (AESTQTRKESKLSGNIDLGAGSSDSKEKTGGN), and 1437–1469 (PQQDTTGAVSFSKAEGKVTLPATPAGEKPQGPL). 2 stretches are compositionally biased toward polar residues: residues 303-313 (SNKNGGDNYQN) and 460-474 (RNHTSSLRTGRWSNS). Basic and acidic residues-rich tracts occupy residues 478–488 (ESLKASELRSE) and 716–726 (EHTRDSEKTTR). A compositionally biased stretch (polar residues) spans 727-736 (TENSASSLSG). Residues 977–996 (DSHRSEAAANRQDEQSRDTR) are compositionally biased toward basic and acidic residues. Residues 1021 to 1030 (TQRSNSSASQ) show a composition bias toward polar residues.

The protein localises to the cell outer membrane. Its function is as follows. Bacterial hemolysins are exotoxins that attack blood cell membranes and cause cell rupture by mechanisms not clearly defined. Functionally, cell-bound hemolysin, which releases heme-iron from erythrocytes by interaction with the erythrocyte membrane. ShlA requires ShlB function. This Serratia marcescens protein is Hemolysin (shlA).